Here is a 397-residue protein sequence, read N- to C-terminus: Lysophospholipid transporter LplT (397 aa).

Residues Met1–Lys17 lie on the Periplasmic side of the membrane. Residues Ala18 to Leu38 form a helical membrane-spanning segment. At Ala39–Pro52 the chain is on the cytoplasmic side. Residues Ile53–Ala73 traverse the membrane as a helical segment. At Asp74–Leu90 the chain is on the periplasmic side. Residues Leu91–Val111 traverse the membrane as a helical segment. At Gly112–Thr144 the chain is on the cytoplasmic side. Residues Ile145 to Val165 traverse the membrane as a helical segment. Residue Ala166 is a topological domain, periplasmic. The helical transmembrane segment at Leu167–Leu187 threads the bilayer. The Cytoplasmic portion of the chain corresponds to Ala188–Ser226. A helical transmembrane segment spans residues Leu227–Leu247. At Gly248 to Thr256 the chain is on the periplasmic side. A helical membrane pass occupies residues Tyr257 to Val277. Topologically, residues Thr278–Glu280 are cytoplasmic. A helical transmembrane segment spans residues Thr281–Leu301. Topologically, residues Gln302–Glu304 are periplasmic. The helical transmembrane segment at Leu305 to Pro325 threads the bilayer. Over Leu326–Ala343 the chain is Cytoplasmic. A helical transmembrane segment spans residues Ile344 to Leu364. Topologically, residues Ala365–Val366 are periplasmic. A helical transmembrane segment spans residues Met367–Ile387. The Cytoplasmic segment spans residues Thr388–His397.

Belongs to the major facilitator superfamily. LplT (TC 2.A.1.42) family.

It is found in the cell inner membrane. Its function is as follows. Catalyzes the facilitated diffusion of 2-acyl-glycero-3-phosphoethanolamine (2-acyl-GPE) into the cell. The protein is Lysophospholipid transporter LplT of Escherichia coli O81 (strain ED1a).